A 253-amino-acid chain; its full sequence is PAXIP1-associated glutamate-rich protein 1A (253 aa).

2 disordered regions span residues 1–108 and 126–253; these read MSLA…MPPP and LQAE…QRKY. Basic and acidic residues predominate over residues 45–66; the sequence is KAEEEGKGSQEEAGREGSRPEE. A sufficient for interaction with NCOA1 region spans residues 115–159; the sequence is YELLATQGTLELQAEILPRRPPTPEAQSEEERSDEEPEAKEEEEE. The residue at position 137 (T137) is a Phosphothreonine. Residues 141-158 show a composition bias toward acidic residues; sequence QSEEERSDEEPEAKEEEE. 2 positions are modified to phosphoserine: S142 and S147. Residues 160-253 form a sufficient for interaction with ESR1 region; the sequence is KPHMPTEFDF…NSLFPRQRKY (94 aa). Basic and acidic residues predominate over residues 194 to 222; sequence QKREARLDKVLSDMKRHKKLEEQILRTGR. Phosphoserine is present on S236. A compositionally biased stretch (polar residues) spans 238-247; the sequence is PLRSSGNSLF.

As to quaternary structure, component of the KMT2 family MLL2/MLL3 complex, at least composed of the histone methyltransferases KMT2D and/or KMT2C, the common subunits ASH2L, RBBP5, WDR5 and DPY30, and the complex type-specific subunits PAXIP1/PTIP, PAGR1, NCOA6 and KDM6A; PAXIP1 is required for the association with the MLL2/MLL3 complex. Forms a constitutive complex with PAXIP1/PTIP independently of the MLL2/MLL3 complex. Interacts with NCOA1, ESR1, NR3C1, AR.

The protein localises to the nucleus. In terms of biological role, its association with the histone methyltransferase MLL2/MLL3 complex is suggesting a role in epigenetic transcriptional activation. However, in association with PAXIP1/PTIP is proposed to function at least in part independently of the MLL2/MLL3 complex. Proposed to be recruited by PAXIP1 to sites of DNA damage where the PAGR1:PAXIP1 complex is required for cell survival in response to DNA damage independently of the MLL2/MLL3 complex. However, its function in DNA damage has been questioned. During immunoglobulin class switching in activated B-cells is involved in transcription regulation of downstream switch regions at the immunoglobulin heavy-chain (Igh) locus independently of the MLL2/MLL3 complex. Involved in both estrogen receptor-regulated gene transcription and estrogen-stimulated G1/S cell-cycle transition. Acts as a transcriptional cofactor for nuclear hormone receptors. Inhibits the induction properties of several steroid receptors such as NR3C1, AR and PPARG; the mechanism of inhibition appears to be gene-dependent. May be involved in the regulation of the BMP pathway in extraembryonic development. This chain is PAXIP1-associated glutamate-rich protein 1A, found in Mus musculus (Mouse).